A 1094-amino-acid chain; its full sequence is MEELKTCPFTNVIPYGLLYDKLKKEKNNDVPENYVIEEFDKLLKNYERPNVYDEIGNATFKNDEDLITFQIDLDYTVENIFKNMIYNESGSNNSILNDIYMPYRILLSKDKNYVSVPIIRIYSLRKDGCSVLINVHNFFPYFYVEKPDDFDNEDLIKLEMLMNENLNLNSQYKIYEKKILKIEIVKTESLMYFKKNGKKDFLKITVLLPKMVPSLKKYFEGIVHVNNKSIGGIVYEANLPFILRYIIDHKITGSSWINCKKGHYYIRNKNKKISNCTFEIDISYEHVEPITLENEYQQIPKLRILSFDIECIKLDGKGFPEAKNDPIIQISSILYFQGEPIDNCTKFIFTLLECASIPGSNVIWFNDEKTLLEAWNEFIIRIDPDFLTGYNIINFDLPYILNRGTALNLKKLKFLGRIKNVASTVKDSSFSSKQFGTHETKEINIFGRIQFDVYDLIKRDYKLKSYTLNYVSFEFLKEQKEDVHYSIMNDLQNESPESRKRIATYCIKDGVLPLRLIDKLLFIYNYVEMARVTGTPFVYLLTRGQQIKVTSQLYRKCKELNYVIPSTYMKVNTNEKYEGATVLEPIKGYYIEPISTLDFASLYPSIMIAHNLCYSTLIKSNHEVSDLQNDDITTIQGKNNLKFVKKNVKKGILPLIVEELIEARKKVKLLIKNEKNNITKMVLNGRQLALKISANSVYGYTGASSGGQLPCLEVAVSITTLGRSMIEKTKERVESFYCKSNGYEHNSTVIYGDTDSVMVKFGTNNIEEAMTLGKDAAERISKEFLSPIKLEFEKVYCPYLLLNKKRYAGLLYTNPNKHDKMDCKGIETVRRDFCILIQQMMETVLNKLLIEKNLNSAIEYTKSKIKELLTNNIDMSLLVVTKSLGKTDYETRLPHVELAKKLKQRDSATAPNVGDRVSYIIVKGVKGQAQYERAEDPLYVLDNNLAIDYNHYLDAIKSPLSRIFEVIMQNSDSLFSGDHTRHKTILTSSQTALSKFLKKSVRCIGCNSSIKKPPLCNHCKENKEFSIYMQKIKDFKNKQNEFFQLWTECQRCQGNLHVDVICMNRDCPIFYRRAKIKKDIANLQEQVTSLRMDW.

Positions 1003, 1006, 1016, and 1019 each coordinate Zn(2+). The CysA-type zinc-finger motif lies at Cys1003 to Cys1019. The [4Fe-4S] cluster site is built by Cys1049, Cys1052, Cys1062, and Cys1067. The CysB motif motif lies at Cys1049–Cys1067.

Belongs to the DNA polymerase type-B family. As to quaternary structure, heterodimer composed of a catalytic subunit POLD and a small regulatory subunit. [4Fe-4S] cluster serves as cofactor. Requires Mg(2+) as cofactor.

Its subcellular location is the nucleus. It catalyses the reaction DNA(n) + a 2'-deoxyribonucleoside 5'-triphosphate = DNA(n+1) + diphosphate. With respect to regulation, the small regulatory subunit delta and PCNA1 increase POLD catalytic activity. In terms of biological role, this polymerase possesses two enzymatic activities: DNA synthesis (polymerase) and an exonucleolytic activity that degrades single-stranded DNA in the 3'- to 5'-direction. The sequence is that of DNA polymerase delta catalytic subunit (POLD) from Plasmodium falciparum (isolate K1 / Thailand).